The primary structure comprises 806 residues: MASGGESKNDDLSTAILKQKNRPNRLIVDESINEDNSVVSLSQAKMDELQLFRGDTVLLKGKKRRETVCIVLSDDTCSDEKVRMNRVVRNNLRVRLGDVISIQPCPDVKYGKRIHVLPIDDTVEGITGNLFEVYLKPYFLEAYRPIRKGDIFLVRGGMRAVEFKVVETDPSPYCIVAPDTVIHCEGEPIKREDEEESLNEVGYDDIGGVRKQLAQIKEMVELPLRHPALFKAIGVKPPRGILLYGPPGTGKTLIARAVANETGAFFFLINGPEIMSKLAGESESNLRKAFEEAEKNAPAIIFIDELDAIAPKREKTHGEVERRIVSQLLTLMDGLKQRAHVIVMAATNRPNSIDPALRRFGRFDREVDIGIPDATGRLEILQIHTKNMKLADDVDLEQVANETHGHVGADLAALCSEAALQAIRKKMDLIDLEDETIDAEVMNSLAVTMDDFRWALSQSNPSALRETVVEVPNITWEDIGGLDDVKRELQELVQYPVEHPDKFLKFGMTPSKGVLFYGPPGCGKTLLAKAIANECQANFISIKGPELLTMWFGESEANVREIFDKARQAAPCVLFFDELDSIAKARGGNVGDGGGAADRVINQILTEMDGMSSKKNVFIIGATNRPDIIDPAILRPGRLDQLIYIPLPDEKSRIAILKANLRKSPISKDVDLDFLAKMTNGFSGADLTEICQRACKLAIRESIENEIRRERERQTNPSAMEVEEDDPVPEIRKDHFEEAMRFARRSVSDNDIRKYEMFAQTLQQSRGFGSFRFPSSNQGGSGPSQGSSGGGGGNVFNEDNDDDLYG.

Ser3 bears the Phosphoserine mark. ATP-binding positions include 247-253, Asn348, His384, and 521-526; these read PGTGKTL and GCGKTL. Disordered regions lie at residues 708 to 727 and 768 to 806; these read RRERERQTNPSAMEVEEDDP and FGSFRFPSSNQGGSGPSQGSSGGGGGNVFNEDNDDDLYG. Over residues 768–778 the composition is skewed to low complexity; it reads FGSFRFPSSNQ. Over residues 779 to 794 the composition is skewed to gly residues; it reads GGSGPSQGSSGGGGGN.

This sequence belongs to the AAA ATPase family. As to quaternary structure, homohexamer.

It is found in the cytoplasm. The protein localises to the cytosol. It localises to the endoplasmic reticulum. The protein resides in the nucleus. It catalyses the reaction ATP + H2O = ADP + phosphate + H(+). In terms of biological role, necessary for the fragmentation of Golgi stacks during mitosis and for their reassembly after mitosis. Involved in the formation of the nuclear envelope, and of the transitional endoplasmic reticulum (tER). The transfer of membranes from the endoplasmic reticulum to the Golgi apparatus occurs via 50-70 nm transition vesicles which derive from part-rough, part-smooth transitional elements of the endoplasmic reticulum (tER). Vesicle budding from the tER is an ATP-dependent process. Also involved in DNA damage response: recruited to double-strand breaks (DSBs) sites and promotes the recruitment of tp53bp1 at DNA damage sites. Together with sprtn metalloprotease, involved in the repair of covalent DNA-protein cross-links (DPCs) during DNA synthesis. Involved in interstrand cross-link repair in response to replication stress by mediating unloading of the ubiquitinated CMG helicase complex. Enhances cell cycle progression and inhibits apoptosis at low temperatures. Essential for the maturation of ubiquitin-containing autophagosomes and the clearance of ubiquitinated protein by autophagy. Acts as a negative regulator of type I interferon production by promoting ubiquitination of RIGI. May play a role in the ubiquitin-dependent sorting of membrane proteins to lysosomes where they undergo degradation. May more particularly play a role in caveolins sorting in cells. By controlling the steady-state expression of the IGF1R receptor, indirectly regulates the insulin-like growth factor receptor signaling pathway. The chain is Transitional endoplasmic reticulum ATPase from Danio rerio (Zebrafish).